We begin with the raw amino-acid sequence, 77 residues long: MARRGRPKRRKVCFFTANKITHIDYKDVDLLKRFISERGKILPRRVTGTSAKYQRKLTVAIKRARQVALLPYVNDVN.

Belongs to the bacterial ribosomal protein bS18 family. In terms of assembly, part of the 30S ribosomal subunit. Forms a tight heterodimer with protein bS6.

In terms of biological role, binds as a heterodimer with protein bS6 to the central domain of the 16S rRNA, where it helps stabilize the platform of the 30S subunit. This chain is Small ribosomal subunit protein bS18, found in Shouchella clausii (strain KSM-K16) (Alkalihalobacillus clausii).